A 745-amino-acid polypeptide reads, in one-letter code: Receptor-type adenylate cyclase (745 aa).

Residues 1 to 341 are Extracellular-facing; it reads GELGQTDRFF…NEGALTRAQL (341 aa). N-linked (GlcNAc...) asparagine glycosylation is found at asparagine 15, asparagine 50, asparagine 189, and asparagine 312. The chain crosses the membrane as a helical span at residues 342–362; sequence IGVVVGTIFAVLLLLALGIVL. At 363–745 the chain is on the cytoplasmic side; that stretch reads CVALRNTRDN…GSDEVARTCV (383 aa). In terms of domain architecture, Guanylate cyclase spans 384-538; that stretch reads TLIFTDIESS…RTPNLAARTE (155 aa). Mg(2+) contacts are provided by aspartate 389 and aspartate 432.

The protein belongs to the adenylyl cyclase class-3 family. It depends on Mg(2+) as a cofactor.

It is found in the cell membrane. It carries out the reaction ATP = 3',5'-cyclic AMP + diphosphate. In terms of biological role, could act as a receptor for an unknown ligand. The sequence is that of Receptor-type adenylate cyclase from Trypanosoma congolense.